Reading from the N-terminus, the 311-residue chain is D-allose-binding periplasmic protein (311 aa).

Residues 1–23 (MNKYLKYFSGTLVGLMLSTSAFA) form the signal peptide.

This sequence belongs to the bacterial solute-binding protein 2 family.

The protein localises to the periplasm. Part of the binding-protein-dependent transport system AlsBAC for D-allose. The protein is D-allose-binding periplasmic protein (alsB) of Escherichia coli (strain K12).